A 603-amino-acid chain; its full sequence is T-cell surface protein tactile (603 aa).

A signal peptide spans 1-21 (MGRKWTYCVVYAIIQIQFFRG). Residues 22–537 (AWEELFNAGD…ITVNKPRDGM (516 aa)) are Extracellular-facing. 2 Ig-like V-type domains span residues 24–132 (EELF…KTIV) and 139–245 (PYTQ…STTV). 15 N-linked (GlcNAc...) asparagine glycosylation sites follow: asparagine 43, asparagine 108, asparagine 146, asparagine 154, asparagine 164, asparagine 197, asparagine 259, asparagine 307, asparagine 324, asparagine 331, asparagine 349, asparagine 371, asparagine 416, asparagine 425, and asparagine 437. Cysteines 46 and 119 form a disulfide. Residues cysteine 161 and cysteine 229 are joined by a disulfide bond. The region spanning 251-356 (PEILMTVENT…MWNTSSQPIT (106 aa)) is the Ig-like C2-type domain. An intrachain disulfide couples cysteine 272 to cysteine 336. Disordered stretches follow at residues 359 to 383 (LDSGTAPTKRLPNVTGSTLGAQTFP) and 403 to 482 (ENVL…WIPT). The span at 412–436 (PQTSNSSMTTKDVNYSQPSSGTDAK) shows a compositional bias: polar residues. Low complexity predominate over residues 438-450 (SSRAASSSDGGSR). Asparagine 515 is a glycosylation site (N-linked (GlcNAc...) asparagine). Residues 538–558 (SWPVAVATLLFFCILLFGLGV) traverse the membrane as a helical segment. The Cytoplasmic segment spans residues 559–603 (RKWCQYQKEIMERPPPFKPPPPPIKYMCIQEPTGRGMPCHEMEVL).

Homodimer; disulfide-linked. Interacts with PVR.

The protein localises to the membrane. Functionally, may be involved in adhesive interactions of activated T and NK cells during the late phase of the immune response. Promotes NK cell-target adhesion by interacting with PVR present on target cells. May function at a time after T and NK cells have penetrated the endothelium using integrins and selectins, when they are actively engaging diseased cells and moving within areas of inflammation. This Rattus norvegicus (Rat) protein is T-cell surface protein tactile (Cd96).